The following is a 177-amino-acid chain: Large ribosomal subunit protein uL6 (177 aa).

It belongs to the universal ribosomal protein uL6 family. In terms of assembly, part of the 50S ribosomal subunit.

This protein binds to the 23S rRNA, and is important in its secondary structure. It is located near the subunit interface in the base of the L7/L12 stalk, and near the tRNA binding site of the peptidyltransferase center. This Actinobacillus pleuropneumoniae serotype 5b (strain L20) protein is Large ribosomal subunit protein uL6.